A 277-amino-acid chain; its full sequence is Radial spoke head protein 9 homolog (277 aa).

Belongs to the flagellar radial spoke RSP9 family. As to quaternary structure, component of axonemal radial spoke complexes.

It is found in the cytoplasm. The protein localises to the cytoskeleton. It localises to the cilium axoneme. The protein resides in the flagellum axoneme. Its subcellular location is the cell projection. It is found in the kinocilium. Functions as part of axonemal radial spoke complexes that play an important part in the motility of sperm and cilia. Required for motility of olfactory and neural cilia and for the structural integrity of ciliary axonemes in both 9+0 and 9+2 motile cilia. Essential for both the radial spoke head assembly and the central pair microtubule stability in ependymal motile cilia. This Danio rerio (Zebrafish) protein is Radial spoke head protein 9 homolog (rsph9).